The following is a 288-amino-acid chain: MISRLLSLLCLRLCVGQTDIPENGSPPKPSLSAWPSTVLPTKSHVTMQCKSPTPSKYFILKKEGFALNSVKPYNLTEETADFHFTDLRQNDGGHYTCEYYSKWPHDTPSHPSNALFLLVTGYLPQPSFQAHHRGTVTAGSKVTLQCQKAGSVLGPVKFALLKVGHSTPVQTRSSTGMVSDFSLQNVTARDSGEYSCVYYQAKAPYRASGPSNLLEISVIDNHLPQDLAASTFPPQLTATSPKTPGTMTEGYTVDNLIRVGVAAAILLIVGGFLVEAWHSERLSPNKPW.

Residues 1–16 (MISRLLSLLCLRLCVG) form the signal peptide. At 17 to 258 (QTDIPENGSP…EGYTVDNLIR (242 aa)) the chain is on the extracellular side. 2 Ig-like C2-type domains span residues 27 to 113 (PKPS…HPSN) and 124 to 217 (PQPS…LEIS). Intrachain disulfides connect Cys-49/Cys-97 and Cys-146/Cys-196. Asn-74 and Asn-185 each carry an N-linked (GlcNAc...) asparagine glycan. The helical transmembrane segment at 259–279 (VGVAAAILLIVGGFLVEAWHS) threads the bilayer. At 280–288 (ERLSPNKPW) the chain is on the cytoplasmic side.

In terms of assembly, interacts with Fc receptor gamma chain FCER1G. In terms of processing, N-glycosylated. As to expression, expressed in lung, uterus, lymph nodes, spleen, thymus and bone marrow. Expressed in bone marrow CD11b(+)Gr-1(+) granulocyte precursors and mature neutrophils.

The protein resides in the cell membrane. In terms of biological role, may act as receptor. Negatively regulates TCR-mediated CD4(+) T cell proliferation and activation, possibly by binding an unknown ligand on the T cell surface. Enhances Toll-like receptor-mediated production of pro-inflammatory cytokines by macrophages and neutrophils. The polypeptide is T-cell-interacting, activating receptor on myeloid cells protein 1 (Tarm1) (Mus musculus (Mouse)).